A 352-amino-acid chain; its full sequence is Biotin synthase (352 aa).

The region spanning 44-262 is the Radical SAM core domain; sequence NRVQVSTLLS…LAVARILMPK (219 aa). Residues C59, C63, and C66 each contribute to the [4Fe-4S] cluster site. Positions 103, 134, 194, and 266 each coordinate [2Fe-2S] cluster.

The protein belongs to the radical SAM superfamily. Biotin synthase family. In terms of assembly, homodimer. [4Fe-4S] cluster is required as a cofactor. [2Fe-2S] cluster serves as cofactor.

The catalysed reaction is (4R,5S)-dethiobiotin + (sulfur carrier)-SH + 2 reduced [2Fe-2S]-[ferredoxin] + 2 S-adenosyl-L-methionine = (sulfur carrier)-H + biotin + 2 5'-deoxyadenosine + 2 L-methionine + 2 oxidized [2Fe-2S]-[ferredoxin]. Its pathway is cofactor biosynthesis; biotin biosynthesis; biotin from 7,8-diaminononanoate: step 2/2. Functionally, catalyzes the conversion of dethiobiotin (DTB) to biotin by the insertion of a sulfur atom into dethiobiotin via a radical-based mechanism. This Pseudomonas syringae pv. syringae (strain B728a) protein is Biotin synthase.